Consider the following 133-residue polypeptide: Large-conductance mechanosensitive channel (133 aa).

2 consecutive transmembrane segments (helical) span residues 17–37 (AFILKGNVVELAVAVIIGGAF) and 73–93 (IGSFAGSVIDFLIIAFVLYLA).

This sequence belongs to the MscL family. Homopentamer.

It is found in the cell inner membrane. In terms of biological role, channel that opens in response to stretch forces in the membrane lipid bilayer. May participate in the regulation of osmotic pressure changes within the cell. This Synechococcus elongatus (strain ATCC 33912 / PCC 7942 / FACHB-805) (Anacystis nidulans R2) protein is Large-conductance mechanosensitive channel.